The sequence spans 270 residues: MMNFLRNRLVVLGLVLLATVLLYLLLPSMRQGSMEPSLEVQQRMGLMAATPPPPPPPSSVNITVRTGQLPGDPPLFFREALPVDSAGRQILPRLQMVLLHGQAFTSKTWEELGTLSLLASSGYQALALDLPGYGNSPDSESVKSDQSRVDLLKRFLEALGVRAPVLLSPSMSGHYALPFLQRHSAQLHGFVPIAPVGTRGITPQQYHDIQTPTLIIYGELDTNLGAQSHKNLIQLPNHTVVKLAGARHACYMDKPREFHRALLDFLSKLD.

Residues 9–29 (LVVLGLVLLATVLLYLLLPSM) form a helical; Signal-anchor for type II membrane protein membrane-spanning segment. The N-linked (GlcNAc...) asparagine glycan is linked to Asn-61. Residues Ser-170 and Asp-221 each act as charge relay system in the active site. N-linked (GlcNAc...) asparagine glycosylation is present at Asn-237. Catalysis depends on His-248, which acts as the Charge relay system.

The protein belongs to the AB hydrolase superfamily. ABHD14 family.

Its subcellular location is the cytoplasm. The protein resides in the membrane. Possible role in granule neuron development. The protein is Protein ABHD14A of Danio rerio (Zebrafish).